The following is a 634-amino-acid chain: DNA-directed RNA polymerase subunit gamma (634 aa).

Residues cysteine 74, cysteine 76, cysteine 89, and cysteine 92 each coordinate Zn(2+). Positions 471, 473, and 475 each coordinate Mg(2+).

Belongs to the RNA polymerase beta' chain family. RpoC1 subfamily. In terms of assembly, in cyanobacteria the RNAP catalytic core is composed of 2 alpha, 1 beta, 1 beta', 1 gamma and 1 omega subunit. When a sigma factor is associated with the core the holoenzyme is formed, which can initiate transcription. It depends on Mg(2+) as a cofactor. Zn(2+) is required as a cofactor.

The catalysed reaction is RNA(n) + a ribonucleoside 5'-triphosphate = RNA(n+1) + diphosphate. Functionally, DNA-dependent RNA polymerase catalyzes the transcription of DNA into RNA using the four ribonucleoside triphosphates as substrates. This is DNA-directed RNA polymerase subunit gamma from Prochlorococcus marinus (strain MIT 9515).